A 204-amino-acid polypeptide reads, in one-letter code: Octanoyltransferase (204 aa).

The BPL/LPL catalytic domain maps to 30–204; it reads CETPDEIWLL…QSFINQLTDV (175 aa). Substrate contacts are provided by residues 69 to 76, 136 to 138, and 149 to 151; these read RGGQITYH, SLG, and GIA. Cys-167 acts as the Acyl-thioester intermediate in catalysis.

It belongs to the LipB family.

The protein localises to the cytoplasm. It carries out the reaction octanoyl-[ACP] + L-lysyl-[protein] = N(6)-octanoyl-L-lysyl-[protein] + holo-[ACP] + H(+). Its pathway is protein modification; protein lipoylation via endogenous pathway; protein N(6)-(lipoyl)lysine from octanoyl-[acyl-carrier-protein]: step 1/2. Catalyzes the transfer of endogenously produced octanoic acid from octanoyl-acyl-carrier-protein onto the lipoyl domains of lipoate-dependent enzymes. Lipoyl-ACP can also act as a substrate although octanoyl-ACP is likely to be the physiological substrate. The polypeptide is Octanoyltransferase (Nitrosomonas europaea (strain ATCC 19718 / CIP 103999 / KCTC 2705 / NBRC 14298)).